A 533-amino-acid chain; its full sequence is Acetone monooxygenase (methyl acetate-forming) (533 aa).

FAD-binding positions include 43–46 (TWYW), 55–56 (DS), and Y61. 53–55 (RFD) contacts NADP(+). Residues 183-189 (NGATGIQ), 206-207 (RT), and W492 contribute to the NADP(+) site.

The protein belongs to the FAD-binding monooxygenase family. Homotetramer. FAD is required as a cofactor.

The enzyme catalyses acetone + NADPH + O2 + H(+) = methyl acetate + NADP(+) + H2O. Functionally, plays an important role in the metabolism of acetone derived from propane oxidation. Catalyzes the oxidation of acetone to methyl acetate. Exhibits high catalytic efficiency towards various linear and cyclic ketones, such as butanone, 2-pentanone, 2-heptanone, 2-octanone, 2-nonanone, 2-decanone, cyclobutanone, cyclopentanone and cyclohexanone. Elicits the highest catalytic efficiency towards butanone and cyclobutanone. Is highly specific for NADPH and cannot use NADH. This Gordonia sp. (strain TY-5) protein is Acetone monooxygenase (methyl acetate-forming).